The following is a 776-amino-acid chain: FT-interacting protein 4 (776 aa).

A compositionally biased stretch (basic and acidic residues) spans 1-16 (MQRPPPEDFSLKETKP). The interval 1 to 23 (MQRPPPEDFSLKETKPHLGGGKV) is disordered. C2 domains are found at residues 22–142 (KVTG…PQWY), 181–305 (VSGT…SRWF), and 346–474 (YSSD…THSY). Residues D55, D61, D108, D110, and D115 each contribute to the Ca(2+) site. Transmembrane regions (helical) follow at residues 577–597 (IMGVLSGIIAVGKWFEQICVW), 608–628 (ILFIILVIYPELILPTIFLYL), and 719–739 (LFVLFCLIAAVILYITPFQVV).

The protein belongs to the MCTP family. In terms of assembly, interacts with and regulates subcellular localization and trafficking of STM. Requires Ca(2+) as cofactor. In terms of tissue distribution, highly expressed in both vegetative and inflorescence shoot apical meristems (SAMs). Accumulates in root meristems. Observed in flowers.

It is found in the endoplasmic reticulum membrane. Its subcellular location is the cytoplasm. The protein resides in the vesicle. It localises to the cell membrane. The protein localises to the endosome membrane. It is found in the golgi apparatus membrane. Functionally, required for proliferation and differentiation of shoot stem cells in the shoot apical meristem (SAM), thus determining the appropriate balance between the maintenance of shoot stem cells and their differentiation into other aboveground plant parts via the control of subcellular localization and intercellular trafficking of STM in the shoot apex. Prevents intracellular trafficking of STM to the plasma membrane in cells in the peripheral shoot meristem region thus facilitating STM recycling to the nucleus to maintain stem cells. May function as a signaling molecule by regulating the trafficking of other regulators. The chain is FT-interacting protein 4 from Arabidopsis thaliana (Mouse-ear cress).